The primary structure comprises 179 residues: MNATPASADDLIVIGKIYSVHGVRGEVKVFSFTDPIGNLLDYKTWTLRREGSVEKQVELVSGRLQSKFLVAKLKGLDDREEARLLSGYEICVPRNLFPDLDDGEYYWYQLEGLKVIDQLGQLLGKIDHLLETGSNDVMVVKPCAGSLDDRERLLPYTEQCVLAIDMAAGEMKVDWDADF.

In terms of domain architecture, PRC barrel spans 102–179 (DGEYYWYQLE…EMKVDWDADF (78 aa)).

The protein belongs to the RimM family. As to quaternary structure, binds ribosomal protein uS19.

The protein resides in the cytoplasm. Its function is as follows. An accessory protein needed during the final step in the assembly of 30S ribosomal subunit, possibly for assembly of the head region. Essential for efficient processing of 16S rRNA. May be needed both before and after RbfA during the maturation of 16S rRNA. It has affinity for free ribosomal 30S subunits but not for 70S ribosomes. The polypeptide is Ribosome maturation factor RimM (Pseudomonas savastanoi pv. phaseolicola (strain 1448A / Race 6) (Pseudomonas syringae pv. phaseolicola (strain 1448A / Race 6))).